The following is a 503-amino-acid chain: ATP synthase subunit beta (503 aa).

Residue 157–164 coordinates ATP; the sequence is GGAGVGKT.

It belongs to the ATPase alpha/beta chains family. F-type ATPases have 2 components, CF(1) - the catalytic core - and CF(0) - the membrane proton channel. CF(1) has five subunits: alpha(3), beta(3), gamma(1), delta(1), epsilon(1). CF(0) has three main subunits: a(1), b(2) and c(9-12). The alpha and beta chains form an alternating ring which encloses part of the gamma chain. CF(1) is attached to CF(0) by a central stalk formed by the gamma and epsilon chains, while a peripheral stalk is formed by the delta and b chains.

Its subcellular location is the cell membrane. It catalyses the reaction ATP + H2O + 4 H(+)(in) = ADP + phosphate + 5 H(+)(out). Its function is as follows. Produces ATP from ADP in the presence of a proton gradient across the membrane. The catalytic sites are hosted primarily by the beta subunits. The chain is ATP synthase subunit beta from Christiangramia forsetii (strain DSM 17595 / CGMCC 1.15422 / KT0803) (Gramella forsetii).